We begin with the raw amino-acid sequence, 257 residues long: Acyl-[acyl-carrier-protein]--UDP-N-acetylglucosamine O-acyltransferase (257 aa).

This sequence belongs to the transferase hexapeptide repeat family. LpxA subfamily. Homotrimer.

The protein resides in the cytoplasm. The enzyme catalyses a (3R)-hydroxyacyl-[ACP] + UDP-N-acetyl-alpha-D-glucosamine = a UDP-3-O-[(3R)-3-hydroxyacyl]-N-acetyl-alpha-D-glucosamine + holo-[ACP]. It functions in the pathway glycolipid biosynthesis; lipid IV(A) biosynthesis; lipid IV(A) from (3R)-3-hydroxytetradecanoyl-[acyl-carrier-protein] and UDP-N-acetyl-alpha-D-glucosamine: step 1/6. Its function is as follows. Involved in the biosynthesis of lipid A, a phosphorylated glycolipid that anchors the lipopolysaccharide to the outer membrane of the cell. The protein is Acyl-[acyl-carrier-protein]--UDP-N-acetylglucosamine O-acyltransferase of Anaeromyxobacter sp. (strain K).